A 377-amino-acid chain; its full sequence is F-box protein At4g00755 (377 aa).

An F-box domain is found at 7 to 47; that stretch reads LDTDTSLSILSCLDDPSDIVRASAVSRSWRQFVVKYSLSKN.

In Arabidopsis thaliana (Mouse-ear cress), this protein is F-box protein At4g00755.